The sequence spans 300 residues: Inosose dehydratase (300 aa).

The protein belongs to the IolE/MocC family. Requires glutathione as cofactor. Co(2+) serves as cofactor. It depends on Mn(2+) as a cofactor.

It catalyses the reaction scyllo-inosose = 3D-3,5/4-trihydroxycyclohexane-1,2-dione + H2O. Catalyzes the dehydration of inosose (2-keto-myo-inositol, 2KMI or 2,4,6/3,5-pentahydroxycyclohexanone) to 3D-(3,5/4)-trihydroxycyclohexane-1,2-dione (D-2,3-diketo-4-deoxy-epi-inositol). The polypeptide is Inosose dehydratase (Mesomycoplasma hyopneumoniae (strain 232) (Mycoplasma hyopneumoniae)).